A 206-amino-acid polypeptide reads, in one-letter code: Small ribosomal subunit protein uS4 (206 aa).

The region spanning 96–156 (GRLDNVVYRM…EKAKNQLRVK (61 aa)) is the S4 RNA-binding domain.

The protein belongs to the universal ribosomal protein uS4 family. In terms of assembly, part of the 30S ribosomal subunit. Contacts protein S5. The interaction surface between S4 and S5 is involved in control of translational fidelity.

Functionally, one of the primary rRNA binding proteins, it binds directly to 16S rRNA where it nucleates assembly of the body of the 30S subunit. Its function is as follows. With S5 and S12 plays an important role in translational accuracy. The protein is Small ribosomal subunit protein uS4 of Marinobacter nauticus (strain ATCC 700491 / DSM 11845 / VT8) (Marinobacter aquaeolei).